The primary structure comprises 298 residues: Glutamyl-Q tRNA(Asp) synthetase (298 aa).

L-glutamate contacts are provided by residues 9–13 and Glu45; that span reads RFAPS. The 'HIGH' region motif lies at 12 to 22; that stretch reads PSPSGELHFGS. Cys101, Cys103, Tyr115, and Cys119 together coordinate Zn(2+). Residues Tyr172 and Arg190 each coordinate L-glutamate. A 'KMSKS' region motif is present at residues 228 to 232; the sequence is KLSKQ. Lys231 is an ATP binding site.

Belongs to the class-I aminoacyl-tRNA synthetase family. GluQ subfamily. Requires Zn(2+) as cofactor.

Its function is as follows. Catalyzes the tRNA-independent activation of glutamate in presence of ATP and the subsequent transfer of glutamate onto a tRNA(Asp). Glutamate is transferred on the 2-amino-5-(4,5-dihydroxy-2-cyclopenten-1-yl) moiety of the queuosine in the wobble position of the QUC anticodon. The polypeptide is Glutamyl-Q tRNA(Asp) synthetase (Salmonella typhi).